The primary structure comprises 476 residues: Membrane-bound lytic murein transglycosylase F (476 aa).

A signal peptide spans 1 to 15 (MRSFLLILFCVSLLT). The interval 16–258 (GCQGERVDAA…HLNEKYFAHV (243 aa)) is non-LT domain. Positions 259 to 476 (KRFDYVDTRA…QSEISAAQPN (218 aa)) are LT domain. Glu-303 is an active-site residue. Residues 456–476 (EAQQQTAEKQSQSEISAAQPN) form a disordered region.

This sequence in the N-terminal section; belongs to the bacterial solute-binding protein 3 family. The protein in the C-terminal section; belongs to the transglycosylase Slt family.

It is found in the cell outer membrane. It carries out the reaction Exolytic cleavage of the (1-&gt;4)-beta-glycosidic linkage between N-acetylmuramic acid (MurNAc) and N-acetylglucosamine (GlcNAc) residues in peptidoglycan, from either the reducing or the non-reducing ends of the peptidoglycan chains, with concomitant formation of a 1,6-anhydrobond in the MurNAc residue.. Functionally, murein-degrading enzyme that degrades murein glycan strands and insoluble, high-molecular weight murein sacculi, with the concomitant formation of a 1,6-anhydromuramoyl product. Lytic transglycosylases (LTs) play an integral role in the metabolism of the peptidoglycan (PG) sacculus. Their lytic action creates space within the PG sacculus to allow for its expansion as well as for the insertion of various structures such as secretion systems and flagella. This Shewanella loihica (strain ATCC BAA-1088 / PV-4) protein is Membrane-bound lytic murein transglycosylase F.